The chain runs to 571 residues: MQTNLSQLIKVARGETEADLVLLNARVINVFNAEIEQTNVAVFDGKIAGVGDYRHGKEVIDLKGAYLLPGLINGHTHVESSMLDIAQYARAVVSNGTLALITDLHEISNVCGKEGIDYVLDASADLPLSIFLQVPSCVPATHLETAGAEINSQDVADLLRLPNVTGLGEMMNFPGVLFGVPSVLDKIIAATGKVMDGHAPGLSGKDLNAYISAGIHSDHECIHLAEAKEKLARGMYIMIREGSSEKNLAELLPLVTDKTYKRCLFVVDDRSCADLKSDGDIDAVVRKAIRLGLDPVRAIQLASINTAEYFHLQGHGAIAPGYLANMIVCQNLEQLDIDMVFHKGKLVAEKGQALFKPQSRIPKSLLNSIHIKPFNTEDLVLKTIQPQIPVIEVIPGQIVTRRLDLKITAENGVIKANTELDLLKIVVLERHHQSGNIGHGLIRGFGLKKGAIASSVAHDSHNVVAVGTNDADLYTAIKELERINGGIALAVDGQVTASVSLPVAGLLSTKPLEEVVTELEEINNQVAKLGCKLSAPFATLSFMALPVIPELRLTDLGLVDVKTFKLIPQET.

The protein belongs to the metallo-dependent hydrolases superfamily. Adenine deaminase family. Mn(2+) is required as a cofactor.

It catalyses the reaction adenine + H2O + H(+) = hypoxanthine + NH4(+). This chain is Adenine deaminase, found in Dehalococcoides mccartyi (strain ATCC BAA-2100 / JCM 16839 / KCTC 5957 / BAV1).